A 154-amino-acid polypeptide reads, in one-letter code: Putative pre-16S rRNA nuclease (154 aa).

It belongs to the YqgF nuclease family.

The protein localises to the cytoplasm. Could be a nuclease involved in processing of the 5'-end of pre-16S rRNA. The protein is Putative pre-16S rRNA nuclease of Rickettsia akari (strain Hartford).